Consider the following 681-residue polypeptide: Glycogen-binding subunit 76A (681 aa).

Disordered regions lie at residues 1 to 20 (MNDP…SRPP), 53 to 94 (LGSQ…DLQP), 232 to 251 (SLTE…NGHL), 285 to 391 (FADR…ASNL), and 405 to 435 (QDAT…CRPQ). Residues 59-69 (EEGEGNAEDEP) are compositionally biased toward acidic residues. Positions 72–91 (NGTSTNTWVNSHDSEQTVTD) are enriched in polar residues. Composition is skewed to basic and acidic residues over residues 237–251 (EQTK…NGHL), 297–308 (RVQKESSQERVP), and 321–336 (PSDR…RVQE). Polar residues predominate over residues 353 to 364 (TESISTEVTTLE). The segment covering 365–374 (RSPEESRNDE) has biased composition (basic and acidic residues). Residues 525 to 632 (AVREKQVSLE…NNYGANYCFQ (108 aa)) form the CBM21 domain. Position 545 is a phosphothreonine (T545). S547 and S549 each carry phosphoserine.

This chain is Glycogen-binding subunit 76A (Gbs-76A), found in Drosophila melanogaster (Fruit fly).